We begin with the raw amino-acid sequence, 342 residues long: S-adenosylmethionine:tRNA ribosyltransferase-isomerase (342 aa).

The protein belongs to the QueA family. As to quaternary structure, monomer.

The protein localises to the cytoplasm. It carries out the reaction 7-aminomethyl-7-carbaguanosine(34) in tRNA + S-adenosyl-L-methionine = epoxyqueuosine(34) in tRNA + adenine + L-methionine + 2 H(+). It functions in the pathway tRNA modification; tRNA-queuosine biosynthesis. In terms of biological role, transfers and isomerizes the ribose moiety from AdoMet to the 7-aminomethyl group of 7-deazaguanine (preQ1-tRNA) to give epoxyqueuosine (oQ-tRNA). In Streptococcus pyogenes serotype M6 (strain ATCC BAA-946 / MGAS10394), this protein is S-adenosylmethionine:tRNA ribosyltransferase-isomerase.